A 55-amino-acid polypeptide reads, in one-letter code: UPF0391 membrane protein RSp1666 (55 aa).

A run of 2 helical transmembrane segments spans residues 5-25 (AVIFFIIALIAALFGFGGIAA) and 33-53 (ILFMIFVVLFVVSLFWGLVAG).

This sequence belongs to the UPF0391 family.

Its subcellular location is the cell membrane. This is UPF0391 membrane protein RSp1666 from Ralstonia nicotianae (strain ATCC BAA-1114 / GMI1000) (Ralstonia solanacearum).